Consider the following 195-residue polypeptide: uncharacterized protein (195 aa).

Positions 1–21 (MHFSSCVLVSALAIVTNVATA) are cleaved as a signal peptide. 2 N-linked (GlcNAc...) asparagine glycosylation sites follow: Asn62 and Asn109. The segment at 119 to 141 (DWDEDTVTGENAPDSGEPFSTSH) is disordered.

The protein resides in the secreted. This is an uncharacterized protein from Arthroderma benhamiae (strain ATCC MYA-4681 / CBS 112371) (Trichophyton mentagrophytes).